Here is a 105-residue protein sequence, read N- to C-terminus: MFAVIKAGGKQYKVDRNSIIKVEKIDGELGSKIQFDQILMIGEYSKPSFIGTPIVKGAVVTAEITNQLKDNKIIVFKKKRRKNYRRKAGHRQELTELKILDITKQ.

Belongs to the bacterial ribosomal protein bL21 family. As to quaternary structure, part of the 50S ribosomal subunit. Contacts protein L20.

In terms of biological role, this protein binds to 23S rRNA in the presence of protein L20. In Rickettsia africae (strain ESF-5), this protein is Large ribosomal subunit protein bL21.